A 256-amino-acid polypeptide reads, in one-letter code: Transmembrane protein 187 (256 aa).

A run of 7 helical transmembrane segments spans residues 8–28 (ALFH…TGIF), 51–71 (FLAM…GVYW), 94–112 (VFAG…RIGM), 119–139 (VLDQ…CLCL), 146–168 (WLFL…HPHG), 193–213 (NISS…FVVL), and 233–253 (FWSK…LTSL).

The protein resides in the membrane. This is Transmembrane protein 187 (TMEM187) from Bos taurus (Bovine).